The primary structure comprises 622 residues: Pyranose 2-oxidase (622 aa).

The first 28 residues, 1–28 (MSTSSSDPFYNFAKTSFKSAAAQKASAT), serve as a signal peptide directing secretion. The propeptide occupies 29 to 38 (SLPPLPGPDQ). The residue at position 167 (histidine 167) is a Tele-8alpha-FAD histidine. 2 residues coordinate substrate: glutamine 448 and histidine 450. Histidine 548 acts as the Proton acceptor in catalysis. Residue asparagine 593 is part of the active site.

The protein belongs to the GMC oxidoreductase family. As to quaternary structure, homotetramer. It depends on FAD as a cofactor.

The protein resides in the periplasm. The enzyme catalyses D-glucose + O2 = 2-dehydro-D-glucose + H2O2. Its function is as follows. Catalyzes the oxidation of various aldopyranoses and disaccharides on carbon-2 to the corresponding 2-keto sugars concomitant with the reduction of O(2) to H(2)O(2). Plays an important role in lignin degradation of wood rot fungi by supplying the essential cosubstrate H(2)O(2) for the ligninolytic peroxidases, lignin peroxidase and manganese-dependent peroxidase. The protein is Pyranose 2-oxidase (p2ox) of Trametes pubescens (White-rot fungus).